Reading from the N-terminus, the 261-residue chain is MRVTQLSSQSFIFPSPELALREPNGLLALGGDLTAPRLLAAYQRGIFPWFNPGEMILWWSPDPRAVLFPEDLHISRSMRRFIRHCPYRFTLNHAFADVISACATERDEGTWIGRDVQQAYCQLHALGHAHSLEVWLENELVGGLYGVAVGAVFCGESMFSRADNASKSALMVFCHHFTQHGGELIDCQVLNAHTASLGAVEIPRNFFLQQLSQLQFSPLPAECWLPQSLIFHPRCSKDQPFKTPHIRLYPPLAGRLILLKW.

This sequence belongs to the L/F-transferase family.

The protein localises to the cytoplasm. It catalyses the reaction N-terminal L-lysyl-[protein] + L-leucyl-tRNA(Leu) = N-terminal L-leucyl-L-lysyl-[protein] + tRNA(Leu) + H(+). It carries out the reaction N-terminal L-arginyl-[protein] + L-leucyl-tRNA(Leu) = N-terminal L-leucyl-L-arginyl-[protein] + tRNA(Leu) + H(+). The enzyme catalyses L-phenylalanyl-tRNA(Phe) + an N-terminal L-alpha-aminoacyl-[protein] = an N-terminal L-phenylalanyl-L-alpha-aminoacyl-[protein] + tRNA(Phe). Its function is as follows. Functions in the N-end rule pathway of protein degradation where it conjugates Leu, Phe and, less efficiently, Met from aminoacyl-tRNAs to the N-termini of proteins containing an N-terminal arginine or lysine. In Yersinia pestis bv. Antiqua (strain Antiqua), this protein is Leucyl/phenylalanyl-tRNA--protein transferase.